We begin with the raw amino-acid sequence, 670 residues long: MRICHSRTLSNLKDLPITSRRAMHSAIVNYSTQKAQFPVETNNGEHYWAEKPNKFYQNKRPNFQGITFAKQQDLPSLPVPELKSTLDKYLQTIRPFCNDVETFERQQLLCKDFSEHMGPILQDRLKEYANDKRNWMAKFWDEQSYLQYNDPIVPYVSYFYSHMPLPNHLSKIDNDPLIKATAIISTVVKFIEAIKDESLPVEIIKGMPFCMNSFSLMFNTSRLPGKPEDNQDTNIFYSVYENNFVTIAYKGKFYKLMTHDGNDKPLSENEIWRQLYSVVFQGSQSDPKLGGIGSLTSLPRDQWREVHLELMKDPISQDSLETIHKSSFMLCLDLDQSPVTLEEKSRNCWHGDGINRFYDKSLQFLVTGNGSSGFLAEHSKMDGTPTLFLNNYVCQQLNKLDVDDFMRKVITPSSTVAMKPMELPFIITPKIHKAIESAQLQFKETIGEHDLRVWHYNKYGKTFIKRHGMSPDAFIQQVIQLAVFKYLKRQLPTYEAASTRKYFKGRTETGRSVSTASLEFVSKWQNGDVPIAEKIQALKHSAKEHSTYLKNAANGNGVDRHFFGLKNMLKSNDDQIPPLFKDPLFNYSSTWLISTSQLSSEYFDGYGWSQVNDNGFGLAYMLNNEWLHINIVNKPAKSGASVNRLHYYLSQAADEIFDALENENKRKAKL.

The Proton acceptor role is filled by His-378. CoA is bound by residues Lys-461 and 465–472 (KRHGMSPD). Tyr-494 serves as a coordination point for (R)-carnitine. Ser-498 provides a ligand contact to CoA. Residue Thr-507 coordinates (R)-carnitine. Gln-597 is a binding site for CoA. Residues 668 to 670 (AKL) carry the Microbody targeting signal motif.

This sequence belongs to the carnitine/choline acetyltransferase family.

It is found in the mitochondrion inner membrane. It localises to the peroxisome. It carries out the reaction (R)-carnitine + acetyl-CoA = O-acetyl-(R)-carnitine + CoA. Its function is as follows. Carnitine acetylase is specific for short chain fatty acids. Carnitine acetylase seems to affect the flux through the pyruvate dehydrogenase complex. It may be involved as well in the transport of acetyl-CoA into mitochondria. The polypeptide is Carnitine O-acetyltransferase, mitochondrial (CAT2) (Saccharomyces cerevisiae (strain ATCC 204508 / S288c) (Baker's yeast)).